Consider the following 335-residue polypeptide: LIM and SH3 domain protein F42H10.3 (335 aa).

An LIM zinc-binding domain is found at Cys-5–Ser-65. Nebulin repeat units lie at residues Val-66 to Gly-97 and Thr-98 to Arg-132. Residues Asp-128–Ile-142 are compositionally biased toward basic and acidic residues. 2 disordered regions span residues Asp-128–Ile-151 and Asp-233–Thr-264. Positions Ser-242 to Thr-260 are enriched in low complexity. The region spanning Lys-266 to Leu-327 is the SH3 domain.

This is LIM and SH3 domain protein F42H10.3 from Caenorhabditis elegans.